Here is a 161-residue protein sequence, read N- to C-terminus: Zinc finger protein KNUCKLES (161 aa).

The disordered stretch occupies residues 1–33 (MAEPPPSYLHFVGPAKTRSSSKRHSFSSSAHPA). The C2H2-type zinc-finger motif lies at 38–60 (FPCQYCPRKFYTSQALGGHQNAH). The tract at residues 142–161 (GGNGVMEEDEPLDLDLSLRL) is disordered. Positions 155-159 (LDLSL) match the EAR-like (transcriptional repression) motif.

First expressed in developing carpel primordia, and later in stamens and ovules of flower buds.

The protein localises to the nucleus. Its function is as follows. May function as a transcriptional repressor of cellular proliferation that regulates floral determinacy and relative size of basal pattern elements along the proximo-distal axis of the developing gynoecium. This chain is Zinc finger protein KNUCKLES (KNU), found in Arabidopsis thaliana (Mouse-ear cress).